We begin with the raw amino-acid sequence, 170 residues long: Probable inactive uracil-DNA glycosylase, mitochondrial (170 aa).

Residues 1 to 53 (MALSTPKTLMDFFQPAKRLKASPSSSSSFPAVSVAGRSRDLGSVANSPPRVTV) constitute a mitochondrion transit peptide.

It belongs to the uracil-DNA glycosylase (UDG) superfamily. UNG family.

It localises to the mitochondrion. Its function is as follows. Probable inactive paralog of AtUNG (AC Q9LIH6) generated by a gene duplication event and subsequently disrupted by at least two transposon insertions. This is Probable inactive uracil-DNA glycosylase, mitochondrial from Arabidopsis thaliana (Mouse-ear cress).